We begin with the raw amino-acid sequence, 223 residues long: Pre-protein VI (223 aa).

The propeptide occupies 1–28; it reads MDYAALSPHLGGWALRDHHIGDSSLRGG. The segment at 29-53 is amphipathic alpha-helix essential for membrane lytic activity; that stretch reads AINWGNLGSRITSALNSTGRWLYNT. The tract at residues 31-52 is involved in endosomal membrane lysis; the sequence is NWGNLGSRITSALNSTGRWLYN. The interval 47–73 is interaction with hexon protein; it reads GRWLYNTGNRFVHSNTFNQIKQGIQDS. The Nuclear export signal signature appears at 66 to 75; that stretch reads IKQGIQDSGV. 2 disordered regions span residues 136–155 and 166–203; these read EPPA…PTTR and PPVT…GQWR. Pro residues predominate over residues 138–151; that stretch reads PAAPAAPAPAPPLV. Positions 166–182 are enriched in low complexity; the sequence is PPVTSSAPAVPVDVPTT. Positions 189–198 are enriched in basic residues; that stretch reads PPKRRRKRAR. A Nuclear export signal motif is present at residues 204-215; sequence ARLDSLSGTGVA. An interaction with hexon protein region spans residues 206–212; it reads LDSLSGT. Residues 213–223 are binds to importin alpha/beta, involved in hexon nuclear import; sequence GVATATRRMCY.

It belongs to the adenoviridae protein VI family. Interacts with hexon protein; this interaction allows nuclear import of hexon trimers and possibly pre-capsid assembly. Interacts (via C-terminal NLS) with importin alpha/beta. In terms of assembly, interacts (via PPxY motif) with host NEDD4 ubiquitine ligase; this interaction might play a role in virus intracellular transport during entry. Part of a complex composed of the core-capsid bridging protein, the endosome lysis protein VI and the hexon-linking protein VIII; these interactions bridge the virus core to the capsid. Interacts with peripentonal hexons; this interaction stabilizes the capsid by gluing two peripentonal hexons together and joining them with an adjacent group-of-nine hexon. As to quaternary structure, heterodimer with the viral protease; disulfide-linked. Interacts with the viral protease. In terms of processing, ubiquitinated by Nedd4 following partial capsid disassembly; which might play a role in intracellular virus movement during entry. Post-translationally, contains the major nuclear import and export signals. Proteolytically removed during virion maturation. The processing of the C-terminus turns the precursor into a mature viral structural protein and abrogates its ability to promote hexon import and act as a potential chaperone protein.

It is found in the host nucleus. Its subcellular location is the host cytoplasm. The protein localises to the virion. Functionally, during virus assembly, promotes hexon trimers nuclear import through nuclear pore complexes via an importin alpha/beta-dependent mechanism. By analogy to herpesviruses capsid assembly, might act as a chaperone to promote the formation of the icosahedral capsid. Structural component of the virion that provides increased stability to the particle shell through its interaction with the core-capsid bridging protein and the hexon-linking protein VIII. Fibers shedding during virus entry into host cell allows the endosome lysis protein to be exposed as a membrane-lytic peptide. Exhibits pH-independent membrane fragmentation activity and probably mediates viral rapid escape from host endosome via organellar membrane lysis. It is not clear if it then remains partially associated with the capsid and involved in the intracellular microtubule-dependent transport of capsid to the nucleus, or if it is lost during endosomal penetration. In terms of biological role, cofactor that activates the viral protease. Binds to viral protease in a 1:1 ratio. The protein is Pre-protein VI of Fowl adenovirus A serotype 1 (strain CELO / Phelps) (FAdV-1).